We begin with the raw amino-acid sequence, 152 residues long: MNPAYFLVLAAVCVSLLGAANIPPQPLSFYRYTEMIQCTIRGSLTYLDYMDYGCYCGTGSRGTPVDELDRCCQTHDNCYAEAEEHPKCSSLVKSPYMNLYSYTCSGGTITCNADNDECGAFICNCDRTAALCFAKAPYNEENKEIDISKRCQ.

The signal sequence occupies residues 1–19 (MNPAYFLVLAAVCVSLLGA). Residues 20–27 (ANIPPQPL) constitute a propeptide that is removed on maturation. 7 disulfides stabilise this stretch: Cys38-Cys104, Cys54-Cys151, Cys56-Cys72, Cys71-Cys132, Cys78-Cys125, Cys88-Cys118, and Cys111-Cys123. Residues Tyr55, Gly57, and Gly59 each coordinate Ca(2+). His75 is a catalytic residue. Residue Asp76 coordinates Ca(2+). The active site involves Asp126.

The protein belongs to the phospholipase A2 family. Group I subfamily. D49 sub-subfamily. Ca(2+) serves as cofactor. Expressed by the venom gland.

The protein localises to the secreted. The catalysed reaction is a 1,2-diacyl-sn-glycero-3-phosphocholine + H2O = a 1-acyl-sn-glycero-3-phosphocholine + a fatty acid + H(+). Functionally, PLA2 catalyzes the calcium-dependent hydrolysis of the 2-acyl groups in 3-sn-phosphoglycerides. This Bungarus candidus (Malayan krait) protein is Acidic phospholipase A2 1.